The following is a 210-amino-acid chain: Chorismate pyruvate-lyase (210 aa).

It belongs to the chorismate pyruvate-lyase type 2 family.

It catalyses the reaction chorismate = 4-hydroxybenzoate + pyruvate. Removes the pyruvyl group from chorismate to provide 4-hydroxybenzoate (4HB). Involved in the synthesis of glycosylated p-hydroxybenzoic acid methyl esters (p-HBADs) and phenolic glycolipids (PGL) that play important roles in the pathogenesis of mycobacterial infections. This Mycobacterium leprae (strain TN) protein is Chorismate pyruvate-lyase.